A 152-amino-acid chain; its full sequence is Large ribosomal subunit protein uL15 (152 aa).

Residues 1-56 (MTSTLNTLKSNLGSRKKKLRKGRGIAAGQGASCGFGMRGQKSRSGRPTRPGFEGGQ) form a disordered region. Residues 14-23 (SRKKKLRKGR) show a composition bias toward basic residues. The segment covering 25 to 37 (IAAGQGASCGFGM) has biased composition (gly residues).

It belongs to the universal ribosomal protein uL15 family. In terms of assembly, part of the 50S ribosomal subunit.

Functionally, binds to the 23S rRNA. This Prochlorococcus marinus (strain MIT 9515) protein is Large ribosomal subunit protein uL15.